Reading from the N-terminus, the 147-residue chain is Probable flagellum biosynthesis repressor protein FlbT (147 aa).

Belongs to the FlbT family.

Functionally, has a post-transcriptional repressor function in flagellum biogenesis. Associates with the 5'-UTR of fljK mRNA and promotes its degradation. This Mesorhizobium japonicum (strain LMG 29417 / CECT 9101 / MAFF 303099) (Mesorhizobium loti (strain MAFF 303099)) protein is Probable flagellum biosynthesis repressor protein FlbT.